Here is a 388-residue protein sequence, read N- to C-terminus: DNA ADP-ribosyl transferase-DNA ADP-ribosyl glycohydrolase fusion protein (388 aa).

Residues 6–197 (RELYYITHID…PVIPDPTFFF (192 aa)) form the DarT domain. Residues 10 to 12 (YIT) and Arg-50 each bind NAD(+). An NAD(+)-binding element region spans residues 34–52 (QSINCKKVYDNSIVLKRKS). The active-site Proton acceptor is Arg-50. Residues 107-152 (TDGNAASSETQIYRKSEIKNIKNIISVKDMEYWREEDGSKRKIMAE) form an ADP-ribosylating turn-turn loop region. The active site involves Glu-152. Positions 196 to 376 (FFLPNREIKL…IYLPLEKRIP (181 aa)) constitute a Macro domain. ADP-D-ribose-binding positions include 215–216 (DM), 227–229 (SVN), Thr-301, 339–343 (GCGLG), and 371–372 (LE).

The protein in the N-terminal section; belongs to the DarT ADP-ribosyltransferase family. This sequence in the C-terminal section; belongs to the DarG ADP-ribosyl glycohydrolase family.

It catalyses the reaction an N-(ADP-alpha-D-ribosyl)-thymidine in DNA + H2O = a thymidine in DNA + ADP-D-ribose. It carries out the reaction a thymidine in DNA + NAD(+) = an N-(ADP-alpha-D-ribosyl)-thymidine in DNA + nicotinamide + H(+). Its function is as follows. A fusion protein of the toxic and antitoxin components of a hybrid type II/IV toxin-antitoxin (TA) system. The N-terminal domain ADP-ribosylates ssDNA on a thymidine residue, while the C-terminal domain removes the modification, neutralizing the toxic effect. This is DNA ADP-ribosyl transferase-DNA ADP-ribosyl glycohydrolase fusion protein from Thermosipho africanus (strain H17ap60334).